The chain runs to 910 residues: Seizure 6-like protein 2 (910 aa).

The first 27 residues, 1-27 (MGTPRAQHPPPPQLLFLILLSCPWIQG), serve as a signal peptide directing secretion. Residues 28–844 (LPLKEEEILP…DPSRQLEGGN (817 aa)) are Extracellular-facing. The tract at residues 41–48 (SETPTVAS) is O-glycosylated at one site. The tract at residues 65 to 152 (EMGYLPGSDR…PLGPEGGEEE (88 aa)) is disordered. A compositionally biased stretch (pro residues) spans 123 to 145 (LTPPPGTTAPPPPSPASPGPPLG). A disulfide bridge links Cys-173 with Cys-202. One can recognise a CUB 1 domain in the interval 173–286 (CNNNISEGEG…GGFRIHYQAY (114 aa)). N-linked (GlcNAc...) asparagine glycosylation is found at Asn-176, Asn-222, and Asn-247. The Sushi 1 domain occupies 288 to 347 (LSCGFPPRPAHGDVSVTDLHPGGTATFHCDSGYQLQGEETLICLNGTRPSWNGETPSCMA). 6 disulfide bridges follow: Cys-290–Cys-330, Cys-316–Cys-345, Cys-349–Cys-376, Cys-464–Cys-508, Cys-491–Cys-523, and Cys-527–Cys-553. N-linked (GlcNAc...) asparagine glycans are attached at residues Asn-332, Asn-355, Asn-373, Asn-473, and Asn-517. The region spanning 349–459 (CGGTIHNATL…LLLSLRFEAF (111 aa)) is the CUB 2 domain. The region spanning 462 to 525 (DRCFAPFLAH…WNDTEPACKA (64 aa)) is the Sushi 2 domain. Residues 527–638 (CGGELSEPAG…QGFVLHFKEV (112 aa)) enclose the CUB 3 domain. Asn-641 is a glycosylation site (N-linked (GlcNAc...) asparagine). 3 Sushi domains span residues 642–701 (DTCP…ACQK), 703–766 (MTCA…KCAL), and 769–830 (EPCL…LCKV). 6 disulfides stabilise this stretch: Cys-644–Cys-686, Cys-672–Cys-699, Cys-705–Cys-747, Cys-733–Cys-764, Cys-771–Cys-813, and Cys-799–Cys-828. Residues 845 to 865 (LALAILLPLGLVIVLGSGVYI) traverse the membrane as a helical segment. Over 866–910 (YYTKLQGKSLFGFSGSHSYSPITVESDFSNPLYEAGDTREYEVSI) the chain is Cytoplasmic.

Belongs to the SEZ6 family. Post-translationally, O-glycosylated with core 1 or possibly core 8 glycans.

The protein localises to the cell membrane. It is found in the endoplasmic reticulum membrane. Functionally, may contribute to specialized endoplasmic reticulum functions in neurons. This chain is Seizure 6-like protein 2 (SEZ6L2), found in Homo sapiens (Human).